Here is a 301-residue protein sequence, read N- to C-terminus: Protein SCO2, mitochondrial (301 aa).

A helical transmembrane segment spans residues 82–98 (ATIALLLLSGGTYAYLS). The Thioredoxin domain maps to 101–284 (RRLLETEKEA…IREQIQAYVP (184 aa)). Positions 154, 158, and 245 each coordinate Cu cation.

This sequence belongs to the SCO1/2 family.

It localises to the mitochondrion inner membrane. In terms of biological role, acts as a copper chaperone, transporting copper to the Cu(A) site on the cytochrome c oxidase subunit II (COX2). This Saccharomyces cerevisiae (strain ATCC 204508 / S288c) (Baker's yeast) protein is Protein SCO2, mitochondrial (SCO2).